A 1388-amino-acid polypeptide reads, in one-letter code: Rho-associated protein kinase 2 (1388 aa).

The disordered stretch occupies residues 1-24 (MSRPPPTGKMPGAPEAAAGDGAGA). In terms of domain architecture, Protein kinase spans 92–354 (YDVVKVIGRG…VEEIKSASFF (263 aa)). ATP contacts are provided by residues 98 to 106 (IGRGAFGEV) and K121. D214 serves as the catalytic Proton acceptor. Residues 357 to 425 (DQWNWDNIRE…FRENLLLSDS (69 aa)) form the AGC-kinase C-terminal domain. Residues 363 to 784 (NIRETAAPVV…LNELLKQKDV (422 aa)) are interaction with PPP1R12A. Positions 373-420 (PELSSDIDSSNFDDIEDDKGDVETFPIPKAFVGNQLPFIGFTYFRENL) are interaction with NPM1. T414 is subject to Phosphothreonine; by ROCK2. 2 coiled-coil regions span residues 439 to 1024 (SEES…EKQL) and 1052 to 1131 (SDTD…IGMD). One can recognise an REM-1 domain in the interval 497–573 (TLRQLEREKA…LDEANALLRT (77 aa)). Over residues 513 to 530 (AEYQRKADHEADKKRNLE) the composition is skewed to basic and acidic residues. Residues 513–532 (AEYQRKADHEADKKRNLEND) are disordered. At Y722 the chain carries Phosphotyrosine; by SRC. One can recognise a RhoBD domain in the interval 979–1047 (TSDVANLANE…LAEIMNRKEP (69 aa)). The tract at residues 979–1047 (TSDVANLANE…LAEIMNRKEP (69 aa)) is RHOA binding. S1137 is subject to Phosphoserine. One can recognise a PH domain in the interval 1150–1349 (ESRLEGWLSL…WVSRLVKKIP (200 aa)). T1212 is subject to Phosphothreonine. The Phorbol-ester/DAG-type zinc-finger motif lies at 1260 to 1315 (GHEFIPTLYHFPTNCEACMKPLWHMFKPPPALECSRCHIKCHKDHMDKKEEIIAPC). A disordered region spans residues 1345–1388 (VKKIPKKPPAPDPFARSSPRTSMKIQQNQSIRRPSRQLAPNKPS). A phosphoserine mark is found at S1362 and S1374. The segment covering 1362 to 1376 (SPRTSMKIQQNQSIR) has biased composition (polar residues).

Belongs to the protein kinase superfamily. AGC Ser/Thr protein kinase family. Homodimer. Interacts with IRS1. Interacts with RAF1. Interacts with RHOA (activated by GTP), RHOB, RHOC. Interacts with PPP1R12A. Interacts with EP300. Interacts with CHORDC1. Interacts with BRCA2. Interacts with NPM1; this interaction enhances its activity. Interacts with SORL1. Interacts with PJVK. The cofactor is Mg(2+). In terms of processing, autophosphorylated. Phosphorylation at Tyr-722 reduces its binding to RHOA and is crucial for focal adhesion dynamics. Dephosphorylation by PTPN11 stimulates its RHOA binding activity. Cleaved by granzyme B during apoptosis. This leads to constitutive activation of the kinase and membrane blebbing. In terms of tissue distribution, highly expressed in brain, lung, liver, skeletal muscle, kidney and testis.

The protein localises to the cytoplasm. It is found in the cell membrane. The protein resides in the nucleus. It localises to the cytoskeleton. Its subcellular location is the microtubule organizing center. The protein localises to the centrosome. It carries out the reaction L-seryl-[protein] + ATP = O-phospho-L-seryl-[protein] + ADP + H(+). It catalyses the reaction L-threonyl-[protein] + ATP = O-phospho-L-threonyl-[protein] + ADP + H(+). Activated by RHOA binding. Inhibited by Y-27632. Its function is as follows. Protein kinase which is a key regulator of actin cytoskeleton and cell polarity. Involved in regulation of smooth muscle contraction, actin cytoskeleton organization, stress fiber and focal adhesion formation, neurite retraction, cell adhesion and motility via phosphorylation of ADD1, BRCA2, CNN1, EZR, DPYSL2, EP300, MSN, MYL9/MLC2, NPM1, RDX, PPP1R12A and VIM. Phosphorylates SORL1 and IRF4. Acts as a negative regulator of VEGF-induced angiogenic endothelial cell activation. Positively regulates the activation of p42/MAPK1-p44/MAPK3 and of p90RSK/RPS6KA1 during myogenic differentiation. Plays an important role in the timely initiation of centrosome duplication. Inhibits keratinocyte terminal differentiation. May regulate closure of the eyelids and ventral body wall through organization of actomyosin bundles. Plays a critical role in the regulation of spine and synaptic properties in the hippocampus. Plays a role in placental homeostasis during the perinatal period. Plays an important role in generating the circadian rhythm of the aortic myofilament Ca(2+) sensitivity and vascular contractility by modulating the myosin light chain phosphorylation. This chain is Rho-associated protein kinase 2 (Rock2), found in Rattus norvegicus (Rat).